The primary structure comprises 713 residues: Nucleolin (713 aa).

The interval 1 to 309 is disordered; sequence MVKLAKAGKT…QKIEGSEPTT (309 aa). Lys9, Lys15, and Lys16 each carry N6-acetyllysine. Over residues 24 to 46 the composition is skewed to acidic residues; it reads VEEDSEDEEMSEDEDDSSGEEEV. Phosphoserine occurs at positions 28, 34, 40, and 41. Over residues 56–111 the composition is skewed to low complexity; sequence ATTTPAKKVVVSQTKKAAVPTPAKKAAVTPGKKAAATPAKKAVTPAKVVPTPGKKG. The stretch at 58–65 is repeat 1; the sequence is TTPAKKVV. Positions 58-135 are 8 X 8 AA tandem repeats of X-T-P-X-K-K-X-X; that stretch reads TTPAKKVVVS…GAVTPAKGAK (78 aa). Residue Ser67 is modified to Phosphoserine. Phosphothreonine is present on residues Thr69, Thr76, Thr84, and Thr92. A run of 3 repeats spans residues 75–82, 83–90, and 91–98. Lys96 is subject to N6-acetyllysine. A Phosphothreonine modification is found at Thr99. One copy of the 5; truncated repeat lies at 99 to 104; it reads TPAKVV. Lys102 is subject to N6-acetyllysine. Residues 105–112 form repeat 6; it reads PTPGKKGA. Residue Thr106 is modified to Phosphothreonine. An N6-acetyllysine mark is found at Lys109 and Lys116. Repeat copies occupy residues 120 to 127 and 128 to 135. The residue at position 121 (Thr121) is a Phosphothreonine. Lys124 carries the post-translational modification N6-acetyllysine. Phosphoserine occurs at positions 145 and 157. A compositionally biased stretch (acidic residues) spans 145 to 168; that stretch reads SDEDEDEEDEDDSDEDEDEEDEFE. The span at 169–186 shows a compositional bias: low complexity; that stretch reads PPVVKGVKPAKAAPAAPA. Residues Ser187 and Ser213 each carry the phosphoserine modification. The span at 187 to 218 shows a compositional bias: acidic residues; it reads SEDEDEEDDDDEDDDDDDEEEEEEDDSEEEVM. At Thr221 the chain carries Phosphothreonine. Residues 242–275 are compositionally biased toward acidic residues; sequence EEEEDDEDDEDEEEDEDEEDEEDDEDEDEEEEEE. Positions 288–304 are enriched in basic and acidic residues; that stretch reads MTKQKEAPEAKKQKIEG. Residue Lys301 forms a Glycyl lysine isopeptide (Lys-Gly) (interchain with G-Cter in SUMO1); alternate linkage. Residue Lys301 forms a Glycyl lysine isopeptide (Lys-Gly) (interchain with G-Cter in SUMO2); alternate linkage. Position 305 is a phosphoserine (Ser305). RRM domains are found at residues 311–387 and 397–470; these read FNLF…KPKG and RTLL…YTGE. An N6-acetyllysine modification is found at Lys322. Lys328 is covalently cross-linked (Glycyl lysine isopeptide (Lys-Gly) (interchain with G-Cter in SUMO1); alternate). Lys328 participates in a covalent cross-link: Glycyl lysine isopeptide (Lys-Gly) (interchain with G-Cter in SUMO2); alternate. The residue at position 352 (Lys352) is an N6-acetyllysine. Ser360 bears the Phosphoserine mark. Position 371 is a phosphothreonine (Thr371). A Glycyl lysine isopeptide (Lys-Gly) (interchain with G-Cter in SUMO2) cross-link involves residue Lys374. Lys381 is covalently cross-linked (Glycyl lysine isopeptide (Lys-Gly) (interchain with G-Cter in SUMO2); alternate). Residue Lys381 is modified to N6-acetyllysine; alternate. Lys402 bears the N6-acetyllysine mark. Ser405 is modified (phosphoserine). At Thr409 the chain carries Phosphothreonine. Lys448 is subject to N6-acetyllysine. Ser462 and Ser464 each carry phosphoserine. Lys471 and Lys480 each carry N6-acetyllysine. In terms of domain architecture, RRM 3 spans 489–563; the sequence is KTLVLSNLSY…RTIRLELQGP (75 aa). Lys516 participates in a covalent cross-link: Glycyl lysine isopeptide (Lys-Gly) (interchain with G-Cter in SUMO2); alternate. At Lys516 the chain carries N6-acetyllysine; alternate. Lys524 carries the N6-acetyllysine modification. Residue Ser566 is modified to Phosphoserine. Lys575 is subject to N6-acetyllysine. One can recognise an RRM 4 domain in the interval 575–650; sequence KTLFVKGLSE…NKVTLDWAKP (76 aa). Lys580 is covalently cross-linked (Glycyl lysine isopeptide (Lys-Gly) (interchain with G-Cter in SUMO2); alternate). The residue at position 580 (Lys580) is an N6-acetyllysine; alternate. Phosphoserine is present on Ser583. Lys592 participates in a covalent cross-link: Glycyl lysine isopeptide (Lys-Gly) (interchain with G-Cter in SUMO1); alternate. Residue Lys592 forms a Glycyl lysine isopeptide (Lys-Gly) (interchain with G-Cter in SUMO2); alternate linkage. Ser594 and Ser622 each carry phosphoserine. Residue Lys627 forms a Glycyl lysine isopeptide (Lys-Gly) (interchain with G-Cter in SUMO2) linkage. The interval 645-713 is disordered; sequence LDWAKPKGEG…KPQGKKTKFE (69 aa). Lys649 bears the N6-acetyllysine mark. A compositionally biased stretch (gly residues) spans 653–702; that stretch reads EGGFGGRGGGRGGFGGRGGGRGGRGGFGGRGRGGFGGRGGFRGGRGGGGD. Asymmetric dimethylarginine occurs at positions 659, 663, 669, 673, 676, 682, 684, 690, and 694. Position 697 is an asymmetric dimethylarginine; alternate (Arg697). The residue at position 697 (Arg697) is an Omega-N-methylarginine; alternate.

Identified in a IGF2BP1-dependent mRNP granule complex containing untranslated mRNAs. Component of the SWAP complex that consists of NPM1, NCL/nucleolin, PARP1 and SWAP70. Component of a complex which is at least composed of HTATSF1/Tat-SF1, the P-TEFb complex components CDK9 and CCNT1, RNA polymerase II, SUPT5H, and NCL/nucleolin. Interacts with AICDA. Interacts with APTX. Interacts with C1QBP. Interacts with ERBB4. Interacts (via C-terminus) with FMR1 isoform 6 (via N-terminus). Interacts with GZF1; this interaction is important for nucleolar localization of GZF1. Interacts with NSUN2. Interacts with NVL. Interacts (via N-terminus domain) with SETX. Interacts (via RRM1 and C-terminal RRM4/Arg/Gly-rich domains) with TERT; the interaction is important for nucleolar localization of TERT. Interacts with WDR46. Interacts with ZFP36. Interacts with LRRC34. Interacts with RRP1B. Interacts with HNRNPU; this interaction occurs during mitosis. Interacts with RIOK1; RIOK1 recruits NCL to PRMT5 for symmetrically methylation. Interacts with ZBTB7B. Interacts with MDK; this interaction promotes NCL clustering and lateral movements of this complex into lipid rafts leading to MDK internalization. Interacts with HDGF. Interacts with ALKBH2. Interacts with IGFBP5; this interaction is necessary for IGFBP5 localization to the nucleus. Interacts with DDX24 (when ubiquitinated); this interaction may be important during ribosome biogenesis. In terms of processing, some glutamate residues are glycylated by TTLL8. This modification occurs exclusively on glutamate residues and results in a glycine chain on the gamma-carboxyl group. Symmetrically methylated by PRMT5.

Its subcellular location is the nucleus. The protein resides in the nucleolus. The protein localises to the cytoplasm. In terms of biological role, nucleolin is the major nucleolar protein of growing eukaryotic cells. It is found associated with intranucleolar chromatin and pre-ribosomal particles. It induces chromatin decondensation by binding to histone H1. It is thought to play a role in pre-rRNA transcription and ribosome assembly. May play a role in the process of transcriptional elongation. Binds RNA oligonucleotides with 5'-UUAGGG-3' repeats more tightly than the telomeric single-stranded DNA 5'-TTAGGG-3' repeats. This Rattus norvegicus (Rat) protein is Nucleolin (Ncl).